A 632-amino-acid chain; its full sequence is Chaperone protein HtpG (632 aa).

The interval 1–343 (MSEQTINNKE…SNDLALNVSR (343 aa)) is a; substrate-binding. A b region spans residues 344 to 560 (EILQDNKVTQ…DFEMGTQMAK (217 aa)). The interval 561-632 (LLEAAGQAAP…LSAMNQLLSK (72 aa)) is c.

Belongs to the heat shock protein 90 family. In terms of assembly, homodimer.

The protein localises to the cytoplasm. Functionally, molecular chaperone. Has ATPase activity. The polypeptide is Chaperone protein HtpG (Aliivibrio salmonicida (strain LFI1238) (Vibrio salmonicida (strain LFI1238))).